Here is a 305-residue protein sequence, read N- to C-terminus: tRNA dimethylallyltransferase (305 aa).

An ATP-binding site is contributed by 9-16 (GPTASGKT). Substrate is bound at residue 11 to 16 (TASGKT). 3 interaction with substrate tRNA regions span residues 34-37 (DSAL), 158-162 (QRLSR), and 239-244 (RCVGYR).

It belongs to the IPP transferase family. Monomer. Mg(2+) is required as a cofactor.

It carries out the reaction adenosine(37) in tRNA + dimethylallyl diphosphate = N(6)-dimethylallyladenosine(37) in tRNA + diphosphate. In terms of biological role, catalyzes the transfer of a dimethylallyl group onto the adenine at position 37 in tRNAs that read codons beginning with uridine, leading to the formation of N6-(dimethylallyl)adenosine (i(6)A). The polypeptide is tRNA dimethylallyltransferase (Aeromonas hydrophila subsp. hydrophila (strain ATCC 7966 / DSM 30187 / BCRC 13018 / CCUG 14551 / JCM 1027 / KCTC 2358 / NCIMB 9240 / NCTC 8049)).